The chain runs to 241 residues: Phosducin-like protein 2 (241 aa).

Residues Val34 to Ile202 enclose the Phosducin domain. The segment at Phe89 to Lys241 is thioredoxin fold.

The protein belongs to the phosducin family. Interacts with the CCT chaperonin complex and actin. In terms of tissue distribution, testis-specific.

The protein resides in the endoplasmic reticulum. In terms of biological role, essential for male fertility, spermiogenesis and acrosome formation. The chain is Phosducin-like protein 2 (PDCL2) from Homo sapiens (Human).